The chain runs to 387 residues: S-adenosylmethionine synthase (387 aa).

His15 lines the ATP pocket. Asp17 serves as a coordination point for Mg(2+). Glu43 lines the K(+) pocket. L-methionine contacts are provided by Glu56 and Gln99. The flexible loop stretch occupies residues 99 to 109 (QSPDIAQGVNA). ATP-binding positions include 166-168 (DAK), 232-233 (RF), Asp241, 247-248 (RK), Ala264, and Lys268. Position 241 (Asp241) interacts with L-methionine. Residue Lys272 coordinates L-methionine.

Belongs to the AdoMet synthase family. Homotetramer; dimer of dimers. It depends on Mg(2+) as a cofactor. Requires K(+) as cofactor.

It is found in the cytoplasm. It catalyses the reaction L-methionine + ATP + H2O = S-adenosyl-L-methionine + phosphate + diphosphate. It functions in the pathway amino-acid biosynthesis; S-adenosyl-L-methionine biosynthesis; S-adenosyl-L-methionine from L-methionine: step 1/1. Its function is as follows. Catalyzes the formation of S-adenosylmethionine (AdoMet) from methionine and ATP. The overall synthetic reaction is composed of two sequential steps, AdoMet formation and the subsequent tripolyphosphate hydrolysis which occurs prior to release of AdoMet from the enzyme. This chain is S-adenosylmethionine synthase, found in Dechloromonas aromatica (strain RCB).